Here is a 144-residue protein sequence, read N- to C-terminus: Mediator of RNA polymerase II transcription subunit 21 (144 aa).

The protein belongs to the Mediator complex subunit 21 family. As to quaternary structure, component of the Mediator complex, which is composed of MED1, MED4, MED6, MED7, MED8, MED9, MED10, MED11, MED12, MED13, MED13L, MED14, MED15, MED16, MED17, MED18, MED19, MED20, MED21, MED22, MED23, MED24, MED25, MED26, MED27, MED29, MED30, MED31, CCNC, CDK8 and CDC2L6/CDK11. The MED12, MED13, CCNC and CDK8 subunits form a distinct module termed the CDK8 module. Mediator containing the CDK8 module is less active than Mediator lacking this module in supporting transcriptional activation. Individual preparations of the Mediator complex lacking one or more distinct subunits have been variously termed ARC, CRSP, DRIP, PC2, SMCC and TRAP. Interacts with PPARG. Interacts with THRA in a ligand-dependent fashion.

Its subcellular location is the nucleus. Component of the Mediator complex, a coactivator involved in the regulated transcription of nearly all RNA polymerase II-dependent genes. Mediator functions as a bridge to convey information from gene-specific regulatory proteins to the basal RNA polymerase II transcription machinery. Mediator is recruited to promoters by direct interactions with regulatory proteins and serves as a scaffold for the assembly of a functional preinitiation complex with RNA polymerase II and the general transcription factors. The sequence is that of Mediator of RNA polymerase II transcription subunit 21 (MED21) from Bos taurus (Bovine).